Consider the following 383-residue polypeptide: Probable cell wall hydrolase LytN (383 aa).

The first 49 residues, 1–49 (MFIYYCKECSIMNKQQSKVRYSIRKVSIGILSISIGMFLALGMSNKAYA), serve as a signal peptide directing secretion. The 45-residue stretch at 175 to 219 (QIYTVKKGDTLSAIALKYKTTVSNIQNTNNIANPNLIFIGQKLKV) folds into the LysM domain. The region spanning 241–378 (NSSTLNYLKT…NYENDMIFIR (138 aa)) is the Peptidase C51 domain.

Its subcellular location is the secreted. In terms of biological role, probably involved in peptidoglycan hydrolysis. The chain is Probable cell wall hydrolase LytN (lytN) from Staphylococcus aureus (strain Mu50 / ATCC 700699).